A 258-amino-acid polypeptide reads, in one-letter code: Tetraspanin-15 (258 aa).

Residues 1–20 (MGALGDSAYGARGRLIKFSY) are Cytoplasmic-facing. Residues 21 to 41 (IVTALISILFSISCICYGIWL) traverse the membrane as a helical segment. Residues 42-62 (LARRSQYAELVSPSLYVDVGR) lie on the Extracellular side of the membrane. Residues 63–83 (ILVIISILSILNYLICFYAIF) form a helical membrane-spanning segment. The Cytoplasmic portion of the chain corresponds to 84-93 (KEMRCFVTSC). A helical membrane pass occupies residues 94–114 (AVASIVIAVMLIIGGCIGLNF). The Extracellular segment spans residues 115–223 (RDQLTHYTPL…STCYEPLQND (109 aa)). Residues 224-244 (LLHVMNVASWLCITNAIVQII) form a helical membrane-spanning segment. Topologically, residues 245–258 (PSVAGCWYSKLIRK) are cytoplasmic.

Belongs to the tetraspanin (TM4SF) family. In terms of assembly, interacts with doxa-1 and bli-3. Expressed in the body wall (hyp7 hypodermal syncitium), pharynx and vulva. Expressed in a punctate pattern along the thick region of the hypodermis.

It localises to the membrane. Functionally, plays a role in cuticle biogenesis. In complex with doxa-1 and the dual oxidase bli-3, promotes the generation of reactive oxygen species (ROS) and tyrosine cross-linking of collagen, thus stabilizing cuticular extracellular matrix. The protein is Tetraspanin-15 of Caenorhabditis elegans.